Reading from the N-terminus, the 160-residue chain is uncharacterized protein (160 aa).

This is an uncharacterized protein from Magallana gigas (Pacific oyster).